Consider the following 72-residue polypeptide: Gas vesicle protein A (72 aa).

It belongs to the gas vesicle GvpA family. In terms of assembly, the gas vesicle shell is 2 nm thick and consists of a single layer of this protein. It forms helical ribs nearly perpendicular to the long axis of the vesicle.

Its subcellular location is the gas vesicle shell. In terms of biological role, gas vesicles are hollow, gas filled proteinaceous nanostructures found in some microorganisms. During planktonic growth they allow positioning of the organism at a favorable depth for light or nutrient acquisition. GvpA forms the protein shell. The protein is Gas vesicle protein A of Haloquadratum walsbyi (strain DSM 16790 / HBSQ001).